Reading from the N-terminus, the 178-residue chain is Large ribosomal subunit protein uL6 (178 aa).

This sequence belongs to the universal ribosomal protein uL6 family. In terms of assembly, part of the 50S ribosomal subunit.

In terms of biological role, this protein binds to the 23S rRNA, and is important in its secondary structure. It is located near the subunit interface in the base of the L7/L12 stalk, and near the tRNA binding site of the peptidyltransferase center. The chain is Large ribosomal subunit protein uL6 from Francisella philomiragia subsp. philomiragia (strain ATCC 25017 / CCUG 19701 / FSC 153 / O#319-036).